Reading from the N-terminus, the 506-residue chain is Beta-glucosidase 13 (506 aa).

The first 25 residues, 1–25 (MAAAGEVVMLGGILLPLLLVVAVSG), serve as a signal peptide directing secretion. Glutamine 49 is a binding site for a beta-D-glucoside. A glycan (N-linked (GlcNAc...) asparagine) is linked at asparagine 118. A beta-D-glucoside contacts are provided by residues histidine 153 and 198–199 (NE). Glutamate 199 (proton donor) is an active-site residue. Cysteine 219 and cysteine 226 are oxidised to a cystine. An N-linked (GlcNAc...) asparagine glycan is attached at asparagine 225. Tyrosine 342 provides a ligand contact to a beta-D-glucoside. N-linked (GlcNAc...) asparagine glycosylation is found at asparagine 357 and asparagine 367. Glutamate 413 is an a beta-D-glucoside binding site. The active-site Nucleophile is the glutamate 413. N-linked (GlcNAc...) asparagine glycosylation is present at asparagine 421. A beta-D-glucoside contacts are provided by residues tryptophan 462, 469 to 470 (EW), and phenylalanine 478.

Belongs to the glycosyl hydrolase 1 family.

The catalysed reaction is Hydrolysis of terminal, non-reducing beta-D-glucosyl residues with release of beta-D-glucose.. The chain is Beta-glucosidase 13 (BGLU13) from Oryza sativa subsp. japonica (Rice).